Reading from the N-terminus, the 348-residue chain is D-alanine--D-alanine ligase (348 aa).

The region spanning 132-334 (KRVLESIGIP…YPDLIEELVT (203 aa)) is the ATP-grasp domain. 162-217 (LARLTFPIFVKPANMGSSVGISKAQTKVELRKAIQLALTYDSRVLIEQGVVAREIE) contributes to the ATP binding site. Mg(2+) is bound by residues aspartate 288, glutamate 301, and asparagine 303.

Belongs to the D-alanine--D-alanine ligase family. Requires Mg(2+) as cofactor. Mn(2+) serves as cofactor.

The protein resides in the cytoplasm. The enzyme catalyses 2 D-alanine + ATP = D-alanyl-D-alanine + ADP + phosphate + H(+). It functions in the pathway cell wall biogenesis; peptidoglycan biosynthesis. Its function is as follows. Cell wall formation. This chain is D-alanine--D-alanine ligase, found in Streptococcus pyogenes serotype M6 (strain ATCC BAA-946 / MGAS10394).